The chain runs to 337 residues: GTPase Obg (337 aa).

An Obg domain is found at 4-162 (SNFIDYVKVC…AWVILELKVL (159 aa)). The OBG-type G domain occupies 163–329 (ADVGLVGFPN…LKDLLWTTMN (167 aa)). Residues 169 to 176 (GFPNAGKS), 194 to 198 (FTTLA), 216 to 219 (DIPG), 283 to 286 (SKSD), and 310 to 312 (SSY) contribute to the GTP site. The Mg(2+) site is built by serine 176 and threonine 196.

Belongs to the TRAFAC class OBG-HflX-like GTPase superfamily. OBG GTPase family. Monomer. Mg(2+) is required as a cofactor.

The protein resides in the cytoplasm. Its function is as follows. An essential GTPase which binds GTP, GDP and possibly (p)ppGpp with moderate affinity, with high nucleotide exchange rates and a fairly low GTP hydrolysis rate. Plays a role in control of the cell cycle, stress response, ribosome biogenesis and in those bacteria that undergo differentiation, in morphogenesis control. This is GTPase Obg from Cytophaga hutchinsonii (strain ATCC 33406 / DSM 1761 / CIP 103989 / NBRC 15051 / NCIMB 9469 / D465).